The following is a 329-amino-acid chain: Sideroflexin-1.1 (329 aa).

The next 5 membrane-spanning stretches (helical) occupy residues 100–122 (MPGNMVTTGMLLGLYRTLPGVVF), 150–167 (LFVSYCCATSGAMTVALG), 178–198 (LAARLVPFAAIALANAINIPM), 232–254 (VTLSRIAMAMPYMVMTPIIMNRI), and 274–294 (IQTLIAGIGLYFTTPLCCALF).

Belongs to the sideroflexin family.

Its subcellular location is the mitochondrion inner membrane. The enzyme catalyses L-serine(in) = L-serine(out). It carries out the reaction L-alanine(in) = L-alanine(out). The catalysed reaction is L-cysteine(in) = L-cysteine(out). Its function is as follows. Amino acid transporter importing serine, an essential substrate of the mitochondrial branch of the one-carbon pathway, into mitochondria. Mitochondrial serine is then converted to glycine and formate, which exits to the cytosol where it is used to generate the charged folates that serve as one-carbon donors. May also transport other amino acids including alanine and cysteine. This chain is Sideroflexin-1.1, found in Caenorhabditis elegans.